The sequence spans 299 residues: MYSEIFDFLPPERIKINEPMKEHSSFKIGGPVDLMVLPESIEEIQRITHYCRKKDIPCFVFGLGSNILVRDKGIRGVAIKVGNNLKNISICNDTIFAEAGVRLAELSQAAADYSLSGLEFAEGIPGSLGGAVVMNAGAYGGEMKDVLKEVRAITPDGNLSSFKPEEMKLRYRGSIFQEEELIVVSALMQLHKERAEDIRARMQDFAKRRREKQPLEYPSAGSTFRRPAGFFVGPMIEEMGLKGFKVGGAEVSRKHAGFIINSGNATANEVLELIAIVKAKAKEHYGIELETEVKVVGEE.

One can recognise an FAD-binding PCMH-type domain in the interval I28–E193. R172 is an active-site residue. The active-site Proton donor is S222. Residue E292 is part of the active site.

The protein belongs to the MurB family. The cofactor is FAD.

Its subcellular location is the cytoplasm. It carries out the reaction UDP-N-acetyl-alpha-D-muramate + NADP(+) = UDP-N-acetyl-3-O-(1-carboxyvinyl)-alpha-D-glucosamine + NADPH + H(+). The protein operates within cell wall biogenesis; peptidoglycan biosynthesis. Cell wall formation. The polypeptide is UDP-N-acetylenolpyruvoylglucosamine reductase (Syntrophomonas wolfei subsp. wolfei (strain DSM 2245B / Goettingen)).